The primary structure comprises 370 residues: N-acetyldiaminopimelate deacetylase (370 aa).

The active site involves Asp67. The active-site Proton acceptor is Glu126.

This sequence belongs to the peptidase M20A family. N-acetyldiaminopimelate deacetylase subfamily.

The catalysed reaction is N-acetyl-(2S,6S)-2,6-diaminopimelate + H2O = (2S,6S)-2,6-diaminopimelate + acetate. Its pathway is amino-acid biosynthesis; L-lysine biosynthesis via DAP pathway; LL-2,6-diaminopimelate from (S)-tetrahydrodipicolinate (acetylase route): step 3/3. Its function is as follows. Catalyzes the conversion of N-acetyl-diaminopimelate to diaminopimelate and acetate. This Exiguobacterium sibiricum (strain DSM 17290 / CCUG 55495 / CIP 109462 / JCM 13490 / 255-15) protein is N-acetyldiaminopimelate deacetylase.